We begin with the raw amino-acid sequence, 147 residues long: Large ribosomal subunit protein uL13 (147 aa).

It belongs to the universal ribosomal protein uL13 family. Part of the 50S ribosomal subunit.

Functionally, this protein is one of the early assembly proteins of the 50S ribosomal subunit, although it is not seen to bind rRNA by itself. It is important during the early stages of 50S assembly. The chain is Large ribosomal subunit protein uL13 from Rhodococcus erythropolis (strain PR4 / NBRC 100887).